A 265-amino-acid polypeptide reads, in one-letter code: NAD kinase 1 (265 aa).

The active-site Proton acceptor is the D45. NAD(+)-binding positions include 45-46, 122-123, R148, D150, and A185; these read DG and NE.

It belongs to the NAD kinase family. The cofactor is a divalent metal cation.

It localises to the cytoplasm. It carries out the reaction NAD(+) + ATP = ADP + NADP(+) + H(+). Its function is as follows. Involved in the regulation of the intracellular balance of NAD and NADP, and is a key enzyme in the biosynthesis of NADP. Catalyzes specifically the phosphorylation on 2'-hydroxyl of the adenosine moiety of NAD to yield NADP. In Bacillus anthracis, this protein is NAD kinase 1.